Reading from the N-terminus, the 590-residue chain is 2-hydroxyacyl-CoA lyase (590 aa).

2-hydroxyisobutanoyl-CoA-binding positions include G43, Q128, Q255, 273-274, and R362; that span reads RS. 410-412 provides a ligand contact to thiamine diphosphate; it reads GDL. R417 provides a ligand contact to 2-hydroxyisobutanoyl-CoA. Position 433 (G433) interacts with thiamine diphosphate. D460 contacts Mg(2+). Thiamine diphosphate contacts are provided by residues 461–462 and 487–492; these read GA and NRAWNI. Mg(2+) is bound by residues N487 and A489. E493 functions as the Proton acceptor in the catalytic mechanism. 2-hydroxyisobutanoyl-CoA is bound at residue 561–564; sequence DSGK. Residues 566-590 form a C-terminal lid region; that stretch reads LGFVPDYQALTPWNDAEVARRQEGI.

This sequence belongs to the TPP enzyme family. As to quaternary structure, a homotetramer formed by a dimer of dimers; active sites are located in the dimer interface. The cofactor is Mg(2+). It depends on thiamine diphosphate as a cofactor.

The catalysed reaction is 2-hydroxyisobutanoyl-CoA = formyl-CoA + acetone. Activity is stimulated by thiamine diphosphate. Functionally, a lyase that reversibly degrades 2-hydroxyisobutyryl-CoA (2-HIB-CoA) to acetone and formyl-CoA. Probably also cleaves 2-hydroxy-2-methylbutyryl-CoA to butanone and formyl-CoA. Does not act on 2-hydroxy-2-ethylbutyryl-CoA. A C-terminal lid closes the active site upon substrate binding, and with residues Leu-127 and Ile-492 restricts the size of the active site cavity so it can only use short-chain (C4 and C5) acyl substrates. Part of a pathway that allows cells to grow on 2-methylpropane-1,2-diol or 2-hydroxyisobutyric acid (2-HIBA) as a sole carbon source. The chain is 2-hydroxyacyl-CoA lyase from Actinomycetospora chiangmaiensis (strain DSM 45062 / JCM 15998 / CCTCC AA 205017 / NBRC 104400 / YIM 0006).